The chain runs to 264 residues: Thymidylate synthase (264 aa).

Arg-21 is a binding site for dUMP. Position 51 (His-51) interacts with (6R)-5,10-methylene-5,6,7,8-tetrahydrofolate. 126-127 contributes to the dUMP binding site; sequence RR. Cys-146 (nucleophile) is an active-site residue. DUMP contacts are provided by residues 166 to 169, Asn-177, and 207 to 209; these read RSAD and HLY. Position 169 (Asp-169) interacts with (6R)-5,10-methylene-5,6,7,8-tetrahydrofolate. Position 263 (Ala-263) interacts with (6R)-5,10-methylene-5,6,7,8-tetrahydrofolate.

Belongs to the thymidylate synthase family. Bacterial-type ThyA subfamily. As to quaternary structure, homodimer.

Its subcellular location is the cytoplasm. It carries out the reaction dUMP + (6R)-5,10-methylene-5,6,7,8-tetrahydrofolate = 7,8-dihydrofolate + dTMP. The protein operates within pyrimidine metabolism; dTTP biosynthesis. In terms of biological role, catalyzes the reductive methylation of 2'-deoxyuridine-5'-monophosphate (dUMP) to 2'-deoxythymidine-5'-monophosphate (dTMP) while utilizing 5,10-methylenetetrahydrofolate (mTHF) as the methyl donor and reductant in the reaction, yielding dihydrofolate (DHF) as a by-product. This enzymatic reaction provides an intracellular de novo source of dTMP, an essential precursor for DNA biosynthesis. The sequence is that of Thymidylate synthase from Bartonella quintana (strain Toulouse) (Rochalimaea quintana).